Consider the following 181-residue polypeptide: Der GTPase-activating protein YihI (181 aa).

2 disordered regions span residues 1-75 (MSRK…KKIP) and 145-181 (EPEA…DYKG). The segment covering 32 to 43 (RLRKKDKKRKGL) has biased composition (basic residues). Acidic residues predominate over residues 146–155 (PEAEEEFEEE). Positions 156–165 (APVRKSRSDD) are enriched in basic and acidic residues. Positions 166 to 181 (DLLADFEDFDMDDYKG) are enriched in acidic residues.

The protein belongs to the YihI family. Interacts with Der.

Functionally, a GTPase-activating protein (GAP) that modifies Der/EngA GTPase function. May play a role in ribosome biogenesis. The protein is Der GTPase-activating protein YihI of Vibrio vulnificus (strain CMCP6).